Here is a 349-residue protein sequence, read N- to C-terminus: Leucine-rich repeat-containing protein 58 (349 aa).

LRR repeat units follow at residues Asn-14–Lys-34, Asp-35–Phe-56, His-58–Thr-80, Lys-81–Gly-102, Arg-105–Gln-125, Thr-128–Leu-149, Ser-151–Pro-173, Tyr-174–Val-195, Ser-197–Leu-217, and Gln-219–Thr-239.

The chain is Leucine-rich repeat-containing protein 58 (lrrc58) from Xenopus tropicalis (Western clawed frog).